Reading from the N-terminus, the 376-residue chain is Putative glutamate--cysteine ligase 2-1 (376 aa).

This sequence belongs to the glutamate--cysteine ligase type 2 family. YbdK subfamily.

The enzyme catalyses L-cysteine + L-glutamate + ATP = gamma-L-glutamyl-L-cysteine + ADP + phosphate + H(+). Functionally, ATP-dependent carboxylate-amine ligase which exhibits weak glutamate--cysteine ligase activity. This chain is Putative glutamate--cysteine ligase 2-1, found in Mycolicibacterium smegmatis (strain ATCC 700084 / mc(2)155) (Mycobacterium smegmatis).